The primary structure comprises 276 residues: Formamidopyrimidine-DNA glycosylase (276 aa).

Proline 2 acts as the Schiff-base intermediate with DNA in catalysis. Glutamate 3 (proton donor) is an active-site residue. Residue lysine 58 is the Proton donor; for beta-elimination activity of the active site. Residues histidine 94, arginine 112, and arginine 157 each contribute to the DNA site. The segment at 242 to 276 (FVYDRAGEPCRVCGAPIRQIVQGQRSTYYCPNCQR) adopts an FPG-type zinc-finger fold. Arginine 266 acts as the Proton donor; for delta-elimination activity in catalysis.

Belongs to the FPG family. In terms of assembly, monomer. It depends on Zn(2+) as a cofactor.

The catalysed reaction is Hydrolysis of DNA containing ring-opened 7-methylguanine residues, releasing 2,6-diamino-4-hydroxy-5-(N-methyl)formamidopyrimidine.. It carries out the reaction 2'-deoxyribonucleotide-(2'-deoxyribose 5'-phosphate)-2'-deoxyribonucleotide-DNA = a 3'-end 2'-deoxyribonucleotide-(2,3-dehydro-2,3-deoxyribose 5'-phosphate)-DNA + a 5'-end 5'-phospho-2'-deoxyribonucleoside-DNA + H(+). Functionally, involved in base excision repair of DNA damaged by oxidation or by mutagenic agents. Acts as a DNA glycosylase that recognizes and removes damaged bases. Has a preference for oxidized purines, such as 7,8-dihydro-8-oxoguanine (8-oxoG). Has AP (apurinic/apyrimidinic) lyase activity and introduces nicks in the DNA strand. Cleaves the DNA backbone by beta-delta elimination to generate a single-strand break at the site of the removed base with both 3'- and 5'-phosphates. The protein is Formamidopyrimidine-DNA glycosylase of Burkholderia thailandensis (strain ATCC 700388 / DSM 13276 / CCUG 48851 / CIP 106301 / E264).